A 915-amino-acid polypeptide reads, in one-letter code: MFAPLLRVLFGSKNDREVKRMRRAVRAINALEEQMVALTDEQLRAKTEEFRGRLGKGETLDQLLPEAFAVAREAGKRVMGMRHFDVQLIGGMVLHEGKIAEMRTGEGKTLVATLAVYLNALAGKGVHVVTVNDYLARRDANWMRPLYEFLGLSVGVVTPFQPPEEKRAAYAADITYGTNNEFGFDYLRDNMAFSLEDKFQRELNYAVIDEVDSILIDEARTPLIISGQAEDSSQLYLQINALIPRLKRHIEEEEGVVTQEGHYVVDEKTRQIELNEQGHQFIEELLASAGLLPEGDNLYSAHNLQLLTHVYAGLRAHVLFHRNVEYIVQGNQVLLIDEHTGRTMQGRRLSEGLHQAIEAKEGLPIQAESQTLASTTFQNYFRLYHKLAGMTGTADTEAFEFRQIYGLDVVVIPTHRPIARKDFNDLVYLTQEEKYAAIIGDIKECQTQGRPVLVGTASIESSEYVSQLLKKEGIAHQVLNAKYHEKEAEIIAQAGRPGAVTIATNMAGRGTDILLGGNWEVEVAALENPTDEPVAQIKADWQKRHQQVIEAGGLHVIASERHESRRIDNQLRGRAGRQGDPGSSRFYLSLEDNLMRIFASDRVKNFMKALGMQAGEAIEHRMVTNAIEKAQRKVEGRNFDMRKQLLEFDDVANEQRKVIYHMRNSLLESEDIGETIAEFRREVLGAAIGQHIPPQSLPEQWDVAGLEAVLQSDFGVQLPLQQWLDEDDRLHEEALRERILEALLVAYREKEEIAGTEALRTFEKQILLRVLDDLWKDHLLTMDHLRHGIHLRGYAQKNPKQEYKRESFELFQSLLESIKRDAIRVLSHVQVRREDPAEEEERLRREAEALARRMQFQHAAASALAPQAEEDDLEVVEEVPLPGTAPVRPEPKIGRNEPCPCGSGKKYKHCHGQLN.

ATP-binding positions include Q87, 105 to 109 (GEGKT), and D512. A disordered region spans residues 881–915 (LPGTAPVRPEPKIGRNEPCPCGSGKKYKHCHGQLN). C899, C901, C910, and H911 together coordinate Zn(2+). The span at 905–915 (KKYKHCHGQLN) shows a compositional bias: basic residues.

It belongs to the SecA family. Monomer and homodimer. Part of the essential Sec protein translocation apparatus which comprises SecA, SecYEG and auxiliary proteins SecDF-YajC and YidC. Zn(2+) serves as cofactor.

The protein localises to the cell inner membrane. The protein resides in the cytoplasm. The enzyme catalyses ATP + H2O + cellular proteinSide 1 = ADP + phosphate + cellular proteinSide 2.. Functionally, part of the Sec protein translocase complex. Interacts with the SecYEG preprotein conducting channel. Has a central role in coupling the hydrolysis of ATP to the transfer of proteins into and across the cell membrane, serving both as a receptor for the preprotein-SecB complex and as an ATP-driven molecular motor driving the stepwise translocation of polypeptide chains across the membrane. The chain is Protein translocase subunit SecA from Azotobacter vinelandii (strain DJ / ATCC BAA-1303).